The sequence spans 367 residues: 2'-5'-oligoadenylate synthase 1A (367 aa).

Residues 14–61 form an interaction with dsRNA region; the sequence is DKFIEDYLLPDTTFGADVKSAVNVVCDFLKERCFQGAAHPVRVSKVVK. Residue Ser64 participates in ATP binding. Mg(2+)-binding residues include Asp76, Asp78, and Asp149. The tract at residues 201 to 211 is interaction with dsRNA; it reads QRPTKLKSLIR. Residues Arg211, Lys214, and Gln231 each coordinate ATP. Residue Cys364 is the site of S-geranylgeranyl cysteine attachment.

This sequence belongs to the 2-5A synthase family. In terms of assembly, monomer. Homotetramer. Interacts with OAS1D; the interaction inhibits OAS1A catalytic activity. Mg(2+) is required as a cofactor. C-terminal prenylated. In terms of tissue distribution, expressed in oocytes and granulosa cells of ovary, in intestine, stomach, spleen and uterus (at protein level). Expressed at high levels in the digestive tract and lymphoid organs. Expressed in ovary and spleen.

The protein resides in the cytoplasm. It localises to the mitochondrion. The protein localises to the nucleus. It is found in the microsome. Its subcellular location is the endoplasmic reticulum. It catalyses the reaction 3 ATP = 5'-triphosphoadenylyl-(2'-&gt;5')-adenylyl-(2'-&gt;5')-adenosine + 2 diphosphate. Its activity is regulated as follows. Produced as a latent enzyme which is activated by dsRNA generated during the course of viral infection. The dsRNA activator must be at least 15 nucleotides long, and no modification of the 2'-hydroxyl group is tolerated. ssRNA or dsDNA do not act as activators. In terms of biological role, interferon-induced, dsRNA-activated antiviral enzyme which plays a critical role in cellular innate antiviral response. In addition, it may also play a role in other cellular processes such as apoptosis, cell growth, differentiation and gene regulation. Synthesizes higher oligomers of 2'-5'-oligoadenylates (2-5A) from ATP which then bind to the inactive monomeric form of ribonuclease L (RNase L) leading to its dimerization and subsequent activation. Activation of RNase L leads to degradation of cellular as well as viral RNA, resulting in the inhibition of protein synthesis, thus terminating viral replication. Can mediate the antiviral effect via the classical RNase L-dependent pathway or an alternative antiviral pathway independent of RNase L. The protein is 2'-5'-oligoadenylate synthase 1A (Oas1a) of Mus musculus (Mouse).